A 266-amino-acid chain; its full sequence is Large ribosomal subunit protein eL8 (266 aa).

Residues lysine 11, lysine 20, and lysine 21 each participate in a glycyl lysine isopeptide (Lys-Gly) (interchain with G-Cter in SUMO2) cross-link. Position 34 is an N6-acetyllysine (lysine 34). Lysine 48 is covalently cross-linked (Glycyl lysine isopeptide (Lys-Gly) (interchain with G-Cter in SUMO2)). Position 97 is an N6-acetyllysine; alternate (lysine 97). Lysine 97 participates in a covalent cross-link: Glycyl lysine isopeptide (Lys-Gly) (interchain with G-Cter in SUMO2); alternate. Residue lysine 125 forms a Glycyl lysine isopeptide (Lys-Gly) (interchain with G-Cter in SUMO2) linkage. An N6-acetyllysine modification is found at lysine 217. Lysine 245 is covalently cross-linked (Glycyl lysine isopeptide (Lys-Gly) (interchain with G-Cter in SUMO2)).

This sequence belongs to the eukaryotic ribosomal protein eL8 family. Component of the large ribosomal subunit. Interacts with CRY1. Interacts with DICER1, AGO2, TARBP2, MOV10 and EIF6; they form a large RNA-induced silencing complex (RISC).

The protein localises to the cytoplasm. Functionally, component of the large ribosomal subunit. The ribosome is a large ribonucleoprotein complex responsible for the synthesis of proteins in the cell. The chain is Large ribosomal subunit protein eL8 (RPL7A) from Bos taurus (Bovine).